The following is a 249-amino-acid chain: Olfactory receptor 1571 (249 aa).

Residues 1–9 (LLMCNLCFA) traverse the membrane as a helical segment. Residues 10–40 (DICFTSASIPTNLVNIQTKNKVITYEGCISQ) lie on the Extracellular side of the membrane. A disulfide bond links C37 and C119. A helical membrane pass occupies residues 41–60 (VYFFILFGVLDNFLLAVMAY). Topologically, residues 61-82 (DRYVAICHPLHYTVIMNRRLCG) are cytoplasmic. The helical transmembrane segment at 83 to 103 (LLVLGSWVTTALNSLLQSSMA) threads the bilayer. The Extracellular portion of the chain corresponds to 104–136 (LRLSFCTDLKIPHFVCELNQLVLLACNDTFPND). N-linked (GlcNAc...) asparagine glycosylation is present at N130. Residues 137-158 (MVMYFAAVLLGGGPLAGILYSY) traverse the membrane as a helical segment. The Cytoplasmic segment spans residues 159 to 180 (SKIVSSIRAISSSQGKYKAFST). A helical membrane pass occupies residues 181-200 (CASHLSVVSLFYSTLLGVYL). Over 201-210 (SSSFTQNSHS) the chain is Extracellular. Residues 211 to 232 (TARASVMYSVVTPMLNPFIYSL) form a helical membrane-spanning segment. Residues 233–249 (RNKDLMGALRRLFRRKP) are Cytoplasmic-facing.

It belongs to the G-protein coupled receptor 1 family. As to expression, tongue specific.

It is found in the cell membrane. Its function is as follows. Possible taste receptor. The sequence is that of Olfactory receptor 1571 (Olr1571) from Rattus norvegicus (Rat).